We begin with the raw amino-acid sequence, 91 residues long: Small ribosomal subunit protein bS20 (91 aa).

Residues 1–18 (MPLHKSAEKRLRQSDRKN) are compositionally biased toward basic and acidic residues. A disordered region spans residues 1 to 25 (MPLHKSAEKRLRQSDRKNARNRARK).

Belongs to the bacterial ribosomal protein bS20 family.

Binds directly to 16S ribosomal RNA. This chain is Small ribosomal subunit protein bS20, found in Chlorobium phaeovibrioides (strain DSM 265 / 1930) (Prosthecochloris vibrioformis (strain DSM 265)).